A 1349-amino-acid chain; its full sequence is ABC multidrug transporter G (1349 aa).

Residues 51 to 299 (RQFLGFLKGS…FEDMGFVCPK (249 aa)) form the ABC transporter 1 domain. N-linked (GlcNAc...) asparagine glycosylation occurs at Asn144. A run of 4 helical transmembrane segments spans residues 407–427 (LSLIIKVVSAILQALVCGSLF), 436–456 (SIFLRPGALFFPVLYFLLESM), 492–512 (IPVVLVQVSCFCIILYFMAAL), and 523–543 (WIIVIANTLCFMQMFRAVGAL). N-linked (GlcNAc...) asparagine glycosylation is present at Asn549. Helical transmembrane passes span 550 to 570 (ASKITGLLSTIFFVYGGYLIP) and 580 to 600 (WIFYLNPGAYAFEALMANEFV). An N-linked (GlcNAc...) asparagine glycan is attached at Asn649. The helical transmembrane segment at 659–679 (FGVIIGFWVFFIVLTALGLEL) threads the bilayer. The 243-residue stretch at 721 to 963 (FTWHDLDYHV…VLDYFARHGA (243 aa)) folds into the ABC transporter 2 domain. 757 to 764 (GCSGAGKT) provides a ligand contact to ATP. N-linked (GlcNAc...) asparagine glycosylation occurs at Asn994. Transmembrane regions (helical) follow at residues 1056-1076 (VILHVFAALFSGFTFWKIGDG), 1085-1105 (FAIFNFIFVAPGCINQMQPFF), 1121-1143 (IYHWLAFIGAQTVSEIPYLILCA), 1166-1186 (MYLQMIFYEFLYTSIGQGIAA), 1193-1213 (FAAVMNPVLIGAGLVSFCGVV), and 1226-1246 (WLYYLDPFTYLVGGLLGEVLW). Residue Asn1287 is glycosylated (N-linked (GlcNAc...) asparagine). A helical transmembrane segment spans residues 1318–1338 (TGITALFCVSSYAMVFLMMKL).

This sequence belongs to the ABC transporter superfamily. ABCG family. PDR (TC 3.A.1.205) subfamily.

The protein localises to the cell membrane. ABC efflux transporter that seems not to be able to transport azoles, nor rhodamine 6G (R-6G), a known substrate for many ABC transporters. The protein is ABC multidrug transporter G of Aspergillus fumigatus (strain ATCC MYA-4609 / CBS 101355 / FGSC A1100 / Af293) (Neosartorya fumigata).